Reading from the N-terminus, the 506-residue chain is 2,3-bisphosphoglycerate-independent phosphoglycerate mutase (506 aa).

Mn(2+) contacts are provided by Asp-13 and Ser-63. The active-site Phosphoserine intermediate is the Ser-63. Substrate is bound by residues His-124, Arg-153–Asp-154, Arg-183, Arg-189, Arg-254–Arg-257, and Lys-330. Mn(2+) is bound by residues Asp-396, His-400, Asp-437, His-438, and His-456.

It belongs to the BPG-independent phosphoglycerate mutase family. In terms of assembly, monomer. It depends on Mn(2+) as a cofactor.

It catalyses the reaction (2R)-2-phosphoglycerate = (2R)-3-phosphoglycerate. Its pathway is carbohydrate degradation; glycolysis; pyruvate from D-glyceraldehyde 3-phosphate: step 3/5. Its function is as follows. Catalyzes the interconversion of 2-phosphoglycerate and 3-phosphoglycerate. The sequence is that of 2,3-bisphosphoglycerate-independent phosphoglycerate mutase from Cereibacter sphaeroides (strain ATCC 17023 / DSM 158 / JCM 6121 / CCUG 31486 / LMG 2827 / NBRC 12203 / NCIMB 8253 / ATH 2.4.1.) (Rhodobacter sphaeroides).